The sequence spans 528 residues: Protein spinster homolog 1 (528 aa).

Residues 1–49 form a disordered region; that stretch reads MAGSDTAPFLSQADDPDDGPVPGTPGLPGSTGNPKSEEPEVPDQEGLQR. Residue A2 is modified to N-acetylalanine. 12 helical membrane-spanning segments follow: residues 50 to 70, 98 to 118, 127 to 147, 160 to 180, 187 to 207, 218 to 238, 278 to 298, 323 to 343, 357 to 377, 381 to 401, 421 to 441, and 465 to 485; these read ITGL…YINL, GLIQ…FGYL, LMCG…FIPG, VGVG…DLFV, MLSI…IAGS, WALR…FLVV, LGFT…PAFL, LIFG…GVEI, LVCA…LACA, IVAT…NWAI, FQIV…IGLI, and MLCA…AIFI. Phosphoserine is present on S518.

The protein belongs to the major facilitator superfamily. Spinster (TC 2.A.1.49) family. Interacts with BCL2 and BCL2L1.

It localises to the lysosome membrane. It is found in the mitochondrion inner membrane. It catalyses the reaction a 1-acyl-sn-glycero-3-phosphocholine(out) + H(+)(out) = a 1-acyl-sn-glycero-3-phosphocholine(in) + H(+)(in). The enzyme catalyses 1-hexadecanoyl-sn-glycero-3-phosphocholine(out) + H(+)(out) = 1-hexadecanoyl-sn-glycero-3-phosphocholine(in) + H(+)(in). The catalysed reaction is 1-(9Z-octadecenoyl)-sn-glycero-3-phosphocholine(out) + H(+)(out) = 1-(9Z-octadecenoyl)-sn-glycero-3-phosphocholine(in) + H(+)(in). It carries out the reaction 1-(5Z,8Z,11Z,14Z-eicosatetraenoyl)-sn-glycero-3-phosphocholine(out) + H(+)(out) = 1-(5Z,8Z,11Z,14Z-eicosatetraenoyl)-sn-glycero-3-phosphocholine(in) + H(+)(in). It catalyses the reaction 1-(4Z,7Z,10Z,13Z,16Z,19Z-docosahexaenoyl)-sn-glycero-3-phosphocholine(out) + H(+)(out) = 1-(4Z,7Z,10Z,13Z,16Z,19Z-docosahexaenoyl)-sn-glycero-3-phosphocholine(in) + H(+)(in). The enzyme catalyses a 1-acyl-sn-glycero-3-phosphoethanolamine(out) + H(+)(out) = a 1-acyl-sn-glycero-3-phosphoethanolamine(in) + H(+)(in). The catalysed reaction is 1-(9Z-octadecenoyl)-sn-glycero-3-phosphoethanolamine(out) + H(+)(out) = 1-(9Z-octadecenoyl)-sn-glycero-3-phosphoethanolamine(in) + H(+)(in). It carries out the reaction 1-acyl-sn-glycero-3-phospho-(1'-sn-glycerol)(out) + H(+)(out) = 1-acyl-sn-glycero-3-phospho-(1'-sn-glycerol)(in) + H(+)(in). It catalyses the reaction 1-(9Z-octadecenoyl)-sn-glycero-3-phospho-(1'-sn-glycerol)(out) + H(+)(out) = 1-(9Z-octadecenoyl)-sn-glycero-3-phospho-(1'-sn-glycerol)(in) + H(+)(in). The enzyme catalyses a 1-O-(1Z-alkenyl)-sn-glycero-3-phosphocholine(out) + H(+)(out) = a 1-O-(1Z-alkenyl)-sn-glycero-3-phosphocholine(in) + H(+)(in). The catalysed reaction is 1-(1Z-hexadecenyl)-sn-glycero-3-phosphocholine(out) + H(+)(out) = 1-(1Z-hexadecenyl)-sn-glycero-3-phosphocholine(in) + H(+)(in). It carries out the reaction a 1-O-(1Z-alkenyl)-sn-glycero-3-phosphoethanolamine(out) + H(+)(out) = a 1-O-(1Z-alkenyl)-sn-glycero-3-phosphoethanolamine(in) + H(+)(in). It catalyses the reaction 1-O-(1Z-hexadecenyl)-sn-glycero-3-phosphoethanolamine(out) + H(+)(out) = 1-O-(1Z-hexadecenyl)-sn-glycero-3-phosphoethanolamine(in) + H(+)(in). Its function is as follows. Plays a critical role in the phospholipid salvage pathway from lysosomes to the cytosol. Mediates the rate-limiting, proton-dependent, lysosomal efflux of lysophospholipids, which can then be reacylated by acyltransferases in the endoplasmic reticulum to form phospholipids. Selective for zwitterionic headgroups such as lysophosphatidylcholine (LPC) and lysophosphatidylethanolamine (LPE), can also transport lysophosphatidylglycerol (LPG), but not other anionic lysophospholipids, sphingosine, nor sphingomyelin. Transports lysophospholipids with saturated, monounsaturated, and polyunsaturated fatty acids, such as 1-hexadecanoyl-sn-glycero-3-phosphocholine, 1-(9Z-octadecenoyl)-sn-glycero-3-phosphocholine and 1-(4Z,7Z,10Z,13Z,16Z,19Z-docosahexaenoyl)-sn-glycero-3-phosphocholine, respectively. Can also transport lysoplasmalogen (LPC with a fatty alcohol) such as 1-(1Z-hexadecenyl)-sn-glycero-3-phosphocholine. Lysosomal LPC could function as intracellular signaling messenger. Essential player in lysosomal homeostasis. Crucial for cell survival under conditions of nutrient limitation. May be involved in necrotic or autophagic cell death. This is Protein spinster homolog 1 (SPNS1) from Homo sapiens (Human).